The chain runs to 300 residues: MGFVKVVKNKQYFKRYQVKFKRRREGKTDYYARKRLIVQDKNKYDTPKYRLIVRFSNRDITCQVAHSRIEGDKIVCAAYSHELPKYGVKVGLTNYAAAYCTGLLVARRLLKKLGLDRLYEGLKEANGEEYYVEPADEGPNAFRCNLDVGLMKTSTGARVFGAMKGAVDGGFNIPHSVKRFPGYDAEAKEYSAETHRKHILGLHVAEYMRKLEEEDEDAFNRQFSQYIKLGIVADDLENMYKKAHENIRSDPKRDRKPKKDVSKEPKRWNAKKLTNAERKQRVVEAKAAYLKELQGEEMES.

Basic and acidic residues predominate over residues 246-267; sequence NIRSDPKRDRKPKKDVSKEPKR. The tract at residues 246-276 is disordered; it reads NIRSDPKRDRKPKKDVSKEPKRWNAKKLTNA.

Belongs to the universal ribosomal protein uL18 family. Component of the large ribosomal subunit (LSU).

It is found in the cytoplasm. The protein localises to the nucleus. In terms of biological role, component of the ribosome, a large ribonucleoprotein complex responsible for the synthesis of proteins in the cell. The small ribosomal subunit (SSU) binds messenger RNAs (mRNAs) and translates the encoded message by selecting cognate aminoacyl-transfer RNA (tRNA) molecules. The large subunit (LSU) contains the ribosomal catalytic site termed the peptidyl transferase center (PTC), which catalyzes the formation of peptide bonds, thereby polymerizing the amino acids delivered by tRNAs into a polypeptide chain. The nascent polypeptides leave the ribosome through a tunnel in the LSU and interact with protein factors that function in enzymatic processing, targeting, and the membrane insertion of nascent chains at the exit of the ribosomal tunnel. The polypeptide is Large ribosomal subunit protein uL18 (RpL5) (Toxoptera citricida (Brown citrus aphid)).